The primary structure comprises 237 residues: Uridylate kinase (237 aa).

Residue 12–15 (KLSG) coordinates ATP. The tract at residues 20-25 (GDEGFG) is involved in allosteric activation by GTP. Gly-54 provides a ligand contact to UMP. The ATP site is built by Gly-55 and Arg-59. UMP contacts are provided by residues Asp-74 and 135-142 (TGSPFFTT). Positions 162, 168, and 171 each coordinate ATP.

It belongs to the UMP kinase family. In terms of assembly, homohexamer.

It localises to the cytoplasm. The catalysed reaction is UMP + ATP = UDP + ADP. Its pathway is pyrimidine metabolism; CTP biosynthesis via de novo pathway; UDP from UMP (UMPK route): step 1/1. With respect to regulation, allosterically activated by GTP. Inhibited by UTP. Functionally, catalyzes the reversible phosphorylation of UMP to UDP. This chain is Uridylate kinase, found in Haemophilus ducreyi (strain 35000HP / ATCC 700724).